A 467-amino-acid polypeptide reads, in one-letter code: Glutamate--tRNA ligase (467 aa).

Residues 9-19 (PSPTGYLHIGG) carry the 'HIGH' region motif. Positions 237–241 (KLSKR) match the 'KMSKS' region motif. Residue Lys-240 coordinates ATP.

It belongs to the class-I aminoacyl-tRNA synthetase family. Glutamate--tRNA ligase type 1 subfamily. As to quaternary structure, monomer.

Its subcellular location is the cytoplasm. It catalyses the reaction tRNA(Glu) + L-glutamate + ATP = L-glutamyl-tRNA(Glu) + AMP + diphosphate. Functionally, catalyzes the attachment of glutamate to tRNA(Glu) in a two-step reaction: glutamate is first activated by ATP to form Glu-AMP and then transferred to the acceptor end of tRNA(Glu). The sequence is that of Glutamate--tRNA ligase from Xylella fastidiosa (strain M12).